The sequence spans 157 residues: Regulator of Ty1 transposition protein 102 (157 aa).

Serine 77 carries the phosphoserine modification. A disordered region spans residues 95 to 157; the sequence is SLMTSHTKGD…TKESKDVKMN (63 aa). The segment covering 96-116 has biased composition (polar residues); it reads LMTSHTKGDTSKATGAPSANQ. Serine 122 is subject to Phosphoserine. Positions 147–157 are enriched in basic and acidic residues; it reads NTKESKDVKMN.

Interacts with STH1 and SWI3. Component of the two forms of the RSC complex composed of at least either RSC1 or RSC2, and ARP7, ARP9, LDB7, NPL6, RSC3, RSC30, RSC4, RSC58, RSC6, RSC8, RSC9, SFH1, STH1, HTL1 and probably RTT102. The complexes interact with histone and histone variant components of centromeric chromatin. Probable additional component of the SWI/SNF global transcription activator complex. The 1.14 MDa SWI/SNF complex is composed of 11 different subunits: one copy each of SWI1, SNF2/SWI2, SNF5, SNF12/SWP73, ARP7/SWP61, ARP9/SWP59; two copies each of SWI3, SNF6, SNF11, SWP82; and three copies of TAF14/SWP29.

The protein localises to the nucleus. In terms of biological role, probable component of the chromatin structure-remodeling complex (RSC) which is involved in transcription regulation and nucleosome positioning. RSC is responsible for the transfer of a histone octamer from a nucleosome core particle to naked DNA. The reaction requires ATP and involves an activated RSC-nucleosome intermediate. Remodeling reaction also involves DNA translocation, DNA twist and conformational change. As a reconfigurer of centromeric and flanking nucleosomes, RSC complex is required both for proper kinetochore function in chromosome segregation and, via a PKC1-dependent signaling pathway, for organization of the cellular cytoskeleton. Probable component of the SWI/SNF complex, an ATP-dependent chromatin-remodeling complex, is required for the positive and negative regulation of gene expression of a large number of genes. It changes chromatin structure by altering DNA-histone contacts within a nucleosome, leading eventually to a change in nucleosome position, thus facilitating or repressing binding of gene-specific transcription factors. The chain is Regulator of Ty1 transposition protein 102 (RTT102) from Saccharomyces cerevisiae (strain ATCC 204508 / S288c) (Baker's yeast).